A 272-amino-acid polypeptide reads, in one-letter code: Biglycan (272 aa).

Positions 1–16 are cleaved as a signal peptide; it reads MWPLWLLASLLALSQA. Positions 17-37 are excised as a propeptide; sequence LPFEQKAFWDFTLDDGLPMLN. Ser42 and Ser48 each carry an O-linked (Xyl...) (glycosaminoglycan) serine glycan. In terms of domain architecture, LRRNT spans 55-91; it reads ALPPTFSAMCPFGCHCHLRVVQCSDLGLKAVPKEISP. Disulfide bonds link Cys64-Cys70 and Cys68-Cys77. 8 LRR repeats span residues 92–113, 116–137, 138–161, 162–183, 186–209, 210–232, 233–254, and 255–272; these read DTTLLDLQNNDISELRKDDFKG, HLYALVLVNNKISRSTRRPSAP, DGLKLNYLRISEAKLTGIPKDLPE, TLNELHLDHNKIQAIELEDLLR, KLYRLGLGHNQIRMIENGSLSFLP, TLRELHLDNNKLSRVPAGLPDLK, LLQVVYLHTNNITKVGVNDFCP, and VGFGVKRAYYNGISLFNN.

It belongs to the small leucine-rich proteoglycan (SLRP) family. SLRP class I subfamily. In terms of assembly, homodimer. Forms a ternary complex with MFAP2 and ELN. Post-translationally, the two attached glycosaminoglycan chains can be either chondroitin sulfate or dermatan sulfate. As to expression, found in several connective tissues, especially in articular cartilages.

It localises to the secreted. It is found in the extracellular space. Its subcellular location is the extracellular matrix. Functionally, may be involved in collagen fiber assembly. This chain is Biglycan (BGN), found in Sus scrofa (Pig).